A 354-amino-acid polypeptide reads, in one-letter code: Serum paraoxonase/arylesterase 2 (354 aa).

A glycan (N-linked (GlcNAc...) asparagine) is linked at Asn29. A disulfide bridge links Cys42 with Cys352. 2 residues coordinate Ca(2+): Glu53 and Asp54. Residue His114 is the Proton acceptor of the active site. Ile116, Asn167, Asp168, and Asn223 together coordinate Ca(2+). N-linked (GlcNAc...) asparagine glycosylation occurs at Asn254. Residues Asp268 and Asn269 each contribute to the Ca(2+) site. N-linked (GlcNAc...) asparagine glycans are attached at residues Asn269 and Asn323.

This sequence belongs to the paraoxonase family. Ca(2+) serves as cofactor. In terms of processing, glycosylated. Post-translationally, the signal sequence is not cleaved.

It localises to the membrane. It carries out the reaction a phenyl acetate + H2O = a phenol + acetate + H(+). The enzyme catalyses An aryl dialkyl phosphate + H2O = dialkyl phosphate + an aryl alcohol.. The absence of paraoxonase activity in turkey and chicken blood and in turkey liver indicates that PON2, if expressed, does not hydrolyze paraoxon. The polypeptide is Serum paraoxonase/arylesterase 2 (PON2) (Gallus gallus (Chicken)).